Consider the following 659-residue polypeptide: Acetyl-coenzyme A synthetase (659 aa).

CoA contacts are provided by residues 206 to 209 (RRGK) and T324. ATP is bound by residues 400–402 (GEP), 424–429 (DTWWQT), D516, R531, and R542. V553 and H555 together coordinate Mg(2+). Residue R600 participates in CoA binding.

It belongs to the ATP-dependent AMP-binding enzyme family. The cofactor is Mg(2+).

It carries out the reaction acetate + ATP + CoA = acetyl-CoA + AMP + diphosphate. Catalyzes the conversion of acetate into acetyl-CoA (AcCoA), an essential intermediate at the junction of anabolic and catabolic pathways. AcsA undergoes a two-step reaction. In the first half reaction, AcsA combines acetate with ATP to form acetyl-adenylate (AcAMP) intermediate. In the second half reaction, it can then transfer the acetyl group from AcAMP to the sulfhydryl group of CoA, forming the product AcCoA. The chain is Acetyl-coenzyme A synthetase (acsA) from Methanothrix thermoacetophila (strain DSM 6194 / JCM 14653 / NBRC 101360 / PT) (Methanosaeta thermophila).